A 616-amino-acid chain; its full sequence is Dihydroxy-acid dehydratase (616 aa).

Aspartate 81 serves as a coordination point for Mg(2+). Residue cysteine 122 coordinates [2Fe-2S] cluster. Mg(2+) contacts are provided by aspartate 123 and lysine 124. N6-carboxylysine is present on lysine 124. Cysteine 195 is a binding site for [2Fe-2S] cluster. Glutamate 491 provides a ligand contact to Mg(2+). The Proton acceptor role is filled by serine 517.

It belongs to the IlvD/Edd family. Homodimer. It depends on [2Fe-2S] cluster as a cofactor. The cofactor is Mg(2+).

The enzyme catalyses (2R)-2,3-dihydroxy-3-methylbutanoate = 3-methyl-2-oxobutanoate + H2O. It catalyses the reaction (2R,3R)-2,3-dihydroxy-3-methylpentanoate = (S)-3-methyl-2-oxopentanoate + H2O. It functions in the pathway amino-acid biosynthesis; L-isoleucine biosynthesis; L-isoleucine from 2-oxobutanoate: step 3/4. The protein operates within amino-acid biosynthesis; L-valine biosynthesis; L-valine from pyruvate: step 3/4. Functionally, functions in the biosynthesis of branched-chain amino acids. Catalyzes the dehydration of (2R,3R)-2,3-dihydroxy-3-methylpentanoate (2,3-dihydroxy-3-methylvalerate) into 2-oxo-3-methylpentanoate (2-oxo-3-methylvalerate) and of (2R)-2,3-dihydroxy-3-methylbutanoate (2,3-dihydroxyisovalerate) into 2-oxo-3-methylbutanoate (2-oxoisovalerate), the penultimate precursor to L-isoleucine and L-valine, respectively. This chain is Dihydroxy-acid dehydratase, found in Escherichia coli O157:H7 (strain EC4115 / EHEC).